We begin with the raw amino-acid sequence, 803 residues long: Phosphoribosylformylglycinamidine synthase subunit PurL (803 aa).

His65 is a catalytic residue. ATP contacts are provided by Tyr68 and Lys107. Glu109 provides a ligand contact to Mg(2+). Substrate is bound by residues 110 to 113 and Arg132; that span reads SHNH. The active-site Proton acceptor is His111. Asp133 is a binding site for Mg(2+). A substrate-binding site is contributed by Gln256. Asp284 contributes to the Mg(2+) binding site. 328–330 provides a ligand contact to substrate; that stretch reads ESQ. ATP contacts are provided by Asn537 and Gly574. Mg(2+) is bound at residue Asn575. Residue Ser577 participates in substrate binding.

It belongs to the FGAMS family. In terms of assembly, monomer. Part of the FGAM synthase complex composed of 1 PurL, 1 PurQ and 2 PurS subunits.

Its subcellular location is the cytoplasm. It carries out the reaction N(2)-formyl-N(1)-(5-phospho-beta-D-ribosyl)glycinamide + L-glutamine + ATP + H2O = 2-formamido-N(1)-(5-O-phospho-beta-D-ribosyl)acetamidine + L-glutamate + ADP + phosphate + H(+). The protein operates within purine metabolism; IMP biosynthesis via de novo pathway; 5-amino-1-(5-phospho-D-ribosyl)imidazole from N(2)-formyl-N(1)-(5-phospho-D-ribosyl)glycinamide: step 1/2. Functionally, part of the phosphoribosylformylglycinamidine synthase complex involved in the purines biosynthetic pathway. Catalyzes the ATP-dependent conversion of formylglycinamide ribonucleotide (FGAR) and glutamine to yield formylglycinamidine ribonucleotide (FGAM) and glutamate. The FGAM synthase complex is composed of three subunits. PurQ produces an ammonia molecule by converting glutamine to glutamate. PurL transfers the ammonia molecule to FGAR to form FGAM in an ATP-dependent manner. PurS interacts with PurQ and PurL and is thought to assist in the transfer of the ammonia molecule from PurQ to PurL. In Prochlorococcus marinus (strain NATL2A), this protein is Phosphoribosylformylglycinamidine synthase subunit PurL.